Consider the following 172-residue polypeptide: Protein YdeJ (172 aa).

Belongs to the CinA family.

Its function is as follows. Does not have nicotinamide-nucleotide (NMN) amidohydrolase activity. This Escherichia coli (strain K12) protein is Protein YdeJ (ydeJ).